We begin with the raw amino-acid sequence, 221 residues long: Transcription factor bHLH126 (221 aa).

Disordered regions lie at residues 1-46 (MDPY…KKLL) and 104-132 (RRDE…VGKS). The bHLH domain occupies 42 to 94 (KKKLLHRDIERQRRQEMATLFATLRTHLPLKYIKGKRAVSDHVNGAVNFIKDT).

In terms of assembly, homodimer.

It localises to the nucleus. The sequence is that of Transcription factor bHLH126 (BHLH126) from Arabidopsis thaliana (Mouse-ear cress).